A 248-amino-acid polypeptide reads, in one-letter code: Triosephosphate isomerase (248 aa).

Substrate-binding residues include N12 and K14. K14 carries the N6-acetyllysine modification. A 3'-nitrotyrosine modification is found at Y68. H96 serves as the catalytic Electrophile. S106 is subject to Phosphoserine. Residue K142 forms a Glycyl lysine isopeptide (Lys-Gly) (interchain with G-Cter in SUMO1) linkage. K149 is modified (N6-succinyllysine). The residue at position 156 (K156) is an N6-acetyllysine; alternate. The residue at position 156 (K156) is an N6-succinyllysine; alternate. Residue E166 is the Proton acceptor of the active site. Phosphothreonine is present on T173. K194 is subject to N6-acetyllysine; alternate. Position 194 is an N6-succinyllysine; alternate (K194). K194 is modified (N6-methyllysine; alternate). A 3'-nitrotyrosine modification is found at Y209. S212 is subject to Phosphoserine. Residue T214 is modified to Phosphothreonine. S223 carries the post-translational modification Phosphoserine. K238 carries the post-translational modification N6-acetyllysine.

It belongs to the triosephosphate isomerase family. As to quaternary structure, homodimer.

It localises to the cytoplasm. The catalysed reaction is dihydroxyacetone phosphate = methylglyoxal + phosphate. The enzyme catalyses D-glyceraldehyde 3-phosphate = dihydroxyacetone phosphate. Its pathway is carbohydrate degradation; glycolysis; D-glyceraldehyde 3-phosphate from glycerone phosphate: step 1/1. It functions in the pathway carbohydrate biosynthesis; gluconeogenesis. Triosephosphate isomerase is an extremely efficient metabolic enzyme that catalyzes the interconversion between dihydroxyacetone phosphate (DHAP) and D-glyceraldehyde-3-phosphate (G3P) in glycolysis and gluconeogenesis. Its function is as follows. It is also responsible for the non-negligible production of methylglyoxal a reactive cytotoxic side-product that modifies and can alter proteins, DNA and lipids. This Sus scrofa (Pig) protein is Triosephosphate isomerase (TPI1).